Reading from the N-terminus, the 188-residue chain is Elongation factor P (188 aa).

This sequence belongs to the elongation factor P family.

Its subcellular location is the cytoplasm. It functions in the pathway protein biosynthesis; polypeptide chain elongation. In terms of biological role, involved in peptide bond synthesis. Stimulates efficient translation and peptide-bond synthesis on native or reconstituted 70S ribosomes in vitro. Probably functions indirectly by altering the affinity of the ribosome for aminoacyl-tRNA, thus increasing their reactivity as acceptors for peptidyl transferase. The protein is Elongation factor P of Acidiphilium cryptum (strain JF-5).